Here is a 216-residue protein sequence, read N- to C-terminus: ATP phosphoribosyltransferase (216 aa).

The protein belongs to the ATP phosphoribosyltransferase family. Short subfamily. Heteromultimer composed of HisG and HisZ subunits.

Its subcellular location is the cytoplasm. The enzyme catalyses 1-(5-phospho-beta-D-ribosyl)-ATP + diphosphate = 5-phospho-alpha-D-ribose 1-diphosphate + ATP. The protein operates within amino-acid biosynthesis; L-histidine biosynthesis; L-histidine from 5-phospho-alpha-D-ribose 1-diphosphate: step 1/9. Catalyzes the condensation of ATP and 5-phosphoribose 1-diphosphate to form N'-(5'-phosphoribosyl)-ATP (PR-ATP). Has a crucial role in the pathway because the rate of histidine biosynthesis seems to be controlled primarily by regulation of HisG enzymatic activity. In Microcystis aeruginosa (strain NIES-843 / IAM M-2473), this protein is ATP phosphoribosyltransferase.